A 619-amino-acid chain; its full sequence is MLRKTLTLISLRRPFSSIPSKTLTPHQKSSFESTLHHSLITHDTDQAWKVFRSFAAASSLPDKRLLNSLITHLSSFHNTDQNTSLRHRLKRAFVSTTYVIEKDPILLEFETVRTVLESMKLAKASGPALALVECMFKNRYFVPFDLWGDLLIDVCRENGSLAAFLKVFRESCRIAVDEKLDFMKPDLVASNAALEACCRQMESLADAENLIESMDVLGVKPDELSFGFLAYLYARKGLREKISELEDLMDGLGFASRRILYSSMISGYVKSGDLDSASDVILCSLKGVGEASSFSEETYCELVRGFIESKSVESLAKLIIEAQKLESMSTDVGGSVGFGIVNACVKLGFSGKSILDELNAQGGSGGIGVYVPILKAYCKEGRTSEATQLVTEISSSGLQLDVETYNTMIEASMTKHDFLSALTLFRDMRETRVADLKRCYLTIMTGLLENQRPELMAEFVEEVMEDPRVEVKSHDWNSIIHAFCKSGRLGDAKSTFRRMTFLQYEPNNQTYLSLINGYVSCEKYFEVVVIWKEFKDKKAKLEHALADAFLNALVKGGFFGTALQVIEKCQEMKIFVDKWRYKATFMETQKNLRLPKLRKRKMKKIEFLDAFKNWARITT.

A mitochondrion-targeting transit peptide spans 1–100 (MLRKTLTLIS…RAFVSTTYVI (100 aa)). 10 PPR repeats span residues 186-221 (DLVASNAALEACCRQMESLADAENLIESMDVLGVKP), 222-256 (DELSFGFLAYLYARKGLREKISELEDLMDGLGFAS), 257-292 (RRILYSSMISGYVKSGDLDSASDVILCSLKGVGEAS), 295-329 (SEETYCELVRGFIESKSVESLAKLIIEAQKLESMS), 366-400 (GIGVYVPILKAYCKEGRTSEATQLVTEISSSGLQL), 401-435 (DVETYNTMIEASMTKHDFLSALTLFRDMRETRVAD), 436-466 (LKRCYLTIMTGLLENQRPELMAEFVEEVMED), 472-506 (KSHDWNSIIHAFCKSGRLGDAKSTFRRMTFLQYEP), 507-541 (NNQTYLSLINGYVSCEKYFEVVVIWKEFKDKKAKL), and 542-576 (EHALADAFLNALVKGGFFGTALQVIEKCQEMKIFV).

It belongs to the PPR family. P subfamily.

Its subcellular location is the mitochondrion. The chain is Pentatricopeptide repeat-containing protein At1g68980, mitochondrial from Arabidopsis thaliana (Mouse-ear cress).